The chain runs to 220 residues: MASTDDPAGQRPSRAEAIVAHAEQSISEDAIVAAARERAVDIGAGAVTPAVGALLSVLARLTEAKAVVEVGTGAGVSGLWLLSGMREDGVLTTIDVEPEHQRIAKQAFIEAGIGPSRTRLISGRAQEVLTRLADESYDLVFIDGDPADQPQFVVEGVRLLRPGGAIVVHRAALGGRAGDAAANDAEVSAVREAARLIAEDERLTPVLVPLGDGLLVAARD.

S-adenosyl-L-methionine contacts are provided by residues Val47, Glu69, 71–72 (GT), Ser77, Asp95, and Val96. Asp143 provides a ligand contact to substrate. Asp145 lines the S-adenosyl-L-methionine pocket.

This sequence belongs to the class I-like SAM-binding methyltransferase superfamily. Cation-dependent O-methyltransferase family.

The chain is Putative O-methyltransferase Mjls_4009 from Mycobacterium sp. (strain JLS).